A 279-amino-acid chain; its full sequence is 1D-myo-inositol 2-acetamido-2-deoxy-alpha-D-glucopyranoside deacetylase (279 aa).

Zn(2+) contacts are provided by His-12, Asp-15, and His-146.

Belongs to the MshB deacetylase family. Zn(2+) serves as cofactor.

It catalyses the reaction 1D-myo-inositol 2-acetamido-2-deoxy-alpha-D-glucopyranoside + H2O = 1D-myo-inositol 2-amino-2-deoxy-alpha-D-glucopyranoside + acetate. Catalyzes the deacetylation of 1D-myo-inositol 2-acetamido-2-deoxy-alpha-D-glucopyranoside (GlcNAc-Ins) in the mycothiol biosynthesis pathway. The polypeptide is 1D-myo-inositol 2-acetamido-2-deoxy-alpha-D-glucopyranoside deacetylase (Mycobacteroides abscessus (strain ATCC 19977 / DSM 44196 / CCUG 20993 / CIP 104536 / JCM 13569 / NCTC 13031 / TMC 1543 / L948) (Mycobacterium abscessus)).